We begin with the raw amino-acid sequence, 792 residues long: Lon protease (792 aa).

The region spanning Leu-16–Leu-208 is the Lon N-terminal domain. Residue Gly-360–Thr-367 participates in ATP binding. The 182-residue stretch at Lys-597–Glu-778 folds into the Lon proteolytic domain. Active-site residues include Ser-684 and Lys-727.

Belongs to the peptidase S16 family. As to quaternary structure, homohexamer. Organized in a ring with a central cavity.

It is found in the cytoplasm. It catalyses the reaction Hydrolysis of proteins in presence of ATP.. Its function is as follows. ATP-dependent serine protease that mediates the selective degradation of mutant and abnormal proteins as well as certain short-lived regulatory proteins. Required for cellular homeostasis and for survival from DNA damage and developmental changes induced by stress. Degrades polypeptides processively to yield small peptide fragments that are 5 to 10 amino acids long. Binds to DNA in a double-stranded, site-specific manner. The chain is Lon protease from Dictyoglomus thermophilum (strain ATCC 35947 / DSM 3960 / H-6-12).